A 130-amino-acid chain; its full sequence is Arginine decarboxylase proenzyme (130 aa).

The active-site Schiff-base intermediate with substrate; via pyruvic acid is Ser78. Ser78 is subject to Pyruvic acid (Ser); by autocatalysis. The active-site Proton acceptor; for processing activity is His83. Catalysis depends on Cys98, which acts as the Proton donor; for catalytic activity.

Belongs to the prokaryotic AdoMetDC family. Type 1 subfamily. Heterooctamer of four alpha and four beta chains arranged as a tetramer of alpha/beta heterodimers. Requires pyruvate as cofactor. Post-translationally, is synthesized initially as an inactive proenzyme. Formation of the active enzyme involves a self-maturation process in which the active site pyruvoyl group is generated from an internal serine residue via an autocatalytic post-translational modification. Two non-identical subunits are generated from the proenzyme in this reaction, and the pyruvate is formed at the N-terminus of the alpha chain, which is derived from the carboxyl end of the proenzyme. The post-translation cleavage follows an unusual pathway, termed non-hydrolytic serinolysis, in which the side chain hydroxyl group of the serine supplies its oxygen atom to form the C-terminus of the beta chain, while the remainder of the serine residue undergoes an oxidative deamination to produce ammonia and the pyruvoyl group blocking the N-terminus of the alpha chain.

It catalyses the reaction L-arginine + H(+) = agmatine + CO2. It functions in the pathway amine and polyamine biosynthesis; agmatine biosynthesis; agmatine from L-arginine: step 1/1. In terms of biological role, specifically catalyzes the decarboxylation of L-arginine to agmatine. Has no S-adenosylmethionine decarboxylase (AdoMetDC) activity. This is Arginine decarboxylase proenzyme from Sulfolobus acidocaldarius (strain ATCC 33909 / DSM 639 / JCM 8929 / NBRC 15157 / NCIMB 11770).